The sequence spans 156 residues: SsrA-binding protein (156 aa).

The segment at R134–R156 is disordered.

The protein belongs to the SmpB family.

It is found in the cytoplasm. Functionally, required for rescue of stalled ribosomes mediated by trans-translation. Binds to transfer-messenger RNA (tmRNA), required for stable association of tmRNA with ribosomes. tmRNA and SmpB together mimic tRNA shape, replacing the anticodon stem-loop with SmpB. tmRNA is encoded by the ssrA gene; the 2 termini fold to resemble tRNA(Ala) and it encodes a 'tag peptide', a short internal open reading frame. During trans-translation Ala-aminoacylated tmRNA acts like a tRNA, entering the A-site of stalled ribosomes, displacing the stalled mRNA. The ribosome then switches to translate the ORF on the tmRNA; the nascent peptide is terminated with the 'tag peptide' encoded by the tmRNA and targeted for degradation. The ribosome is freed to recommence translation, which seems to be the essential function of trans-translation. The polypeptide is SsrA-binding protein (Paenarthrobacter aurescens (strain TC1)).